Reading from the N-terminus, the 148-residue chain is 3-dehydroquinate dehydratase (148 aa).

Tyrosine 23 serves as the catalytic Proton acceptor. Positions 74, 80, and 87 each coordinate substrate. Catalysis depends on histidine 100, which acts as the Proton donor. Substrate-binding positions include 101-102 and arginine 111; that span reads IS.

This sequence belongs to the type-II 3-dehydroquinase family. In terms of assembly, homododecamer.

It catalyses the reaction 3-dehydroquinate = 3-dehydroshikimate + H2O. Its pathway is metabolic intermediate biosynthesis; chorismate biosynthesis; chorismate from D-erythrose 4-phosphate and phosphoenolpyruvate: step 3/7. In terms of biological role, catalyzes a trans-dehydration via an enolate intermediate. The polypeptide is 3-dehydroquinate dehydratase (Halothermothrix orenii (strain H 168 / OCM 544 / DSM 9562)).